Here is a 473-residue protein sequence, read N- to C-terminus: Hyaluronidase-2 (473 aa).

The first 20 residues, 1–20 (MRAGLGPIITLALVLEVAWA), serve as a signal peptide directing secretion. Cystine bridges form between C47–C340 and C211–C227. 2 N-linked (GlcNAc...) asparagine glycosylation sites follow: N74 and N103. Residue E135 is the Proton donor of the active site. N-linked (GlcNAc...) asparagine glycosylation occurs at N357. The EGF-like domain maps to 361-439 (ATQYCSWTQC…YLGWGGEQCQ (79 aa)). 3 cysteine pairs are disulfide-bonded: C365–C376, C370–C427, and C429–C438. N390 carries an N-linked (GlcNAc...) asparagine glycan. The GPI-anchor amidated asparagine; alternate moiety is linked to residue N448. N448 carries an N-linked (GlcNAc...) asparagine; alternate glycan. Positions 449–473 (ASRAWAGSHLTSLLGLVAVALTWTL) are cleaved as a propeptide — removed in mature form.

The protein belongs to the glycosyl hydrolase 56 family. In terms of assembly, interacts with MST1R. In terms of tissue distribution, widely expressed, with highest expression levels in kidney, lung and liver (at protein level).

It localises to the cell membrane. It catalyses the reaction Random hydrolysis of (1-&gt;4)-linkages between N-acetyl-beta-D-glucosamine and D-glucuronate residues in hyaluronate.. Its function is as follows. Catalyzes hyaluronan degradation into small fragments that are endocytosed and degraded in lysosomes by HYAL1 and exoglycosidases. Essential for the breakdown of extracellular matrix hyaluronan. This is Hyaluronidase-2 (Hyal2) from Mus musculus (Mouse).